A 461-amino-acid polypeptide reads, in one-letter code: 3-deoxy-D-manno-octulosonic acid transferase (461 aa).

A helical; Signal-anchor transmembrane segment spans residues 2 to 22; that stretch reads MLLYYTLSFILLPVYFIIIFI. Residues 47–88 form the RPE1 insert domain; the sequence is SALDFIQMSVNKEGFTDHKTTSYVDMHRNASLMYKLSLERSY. E102 (proton acceptor) is an active-site residue. Residues 306–307, 347–349, and 372–375 contribute to the CMP site; these read PR, FGE, and NILE.

This sequence belongs to the glycosyltransferase group 1 family. Glycosyltransferase 30 subfamily.

It localises to the cell inner membrane. The enzyme catalyses lipid IVA (E. coli) + CMP-3-deoxy-beta-D-manno-octulosonate = alpha-Kdo-(2-&gt;6)-lipid IVA (E. coli) + CMP + H(+). Its pathway is bacterial outer membrane biogenesis; LPS core biosynthesis. Its function is as follows. Involved in lipopolysaccharide (LPS) biosynthesis. Catalyzes the transfer of 3-deoxy-D-manno-octulosonate (Kdo) residue(s) from CMP-Kdo to lipid IV(A), the tetraacyldisaccharide-1,4'-bisphosphate precursor of lipid A. The polypeptide is 3-deoxy-D-manno-octulosonic acid transferase (waaA) (Rickettsia prowazekii (strain Madrid E)).